The chain runs to 588 residues: Pescadillo homolog (588 aa).

Positions 1-54 (MGGLEKKKYERGSATNYITRNKARKKLQLSLADFRRLCILKGIYPHEPKHKKKV) are required for 28S ribosomal RNA processing. The tract at residues 1 to 257 (MGGLEKKKYE…PKLEGQAQAE (257 aa)) is sufficient for nucleolar localization. The residue at position 98 (Lys98) is an N6-acetyllysine. The tract at residues 294-314 (EAEVDEFPTDGEMSAQEEDRR) is disordered. A sufficient for interaction with MAP1B region spans residues 306-415 (MSAQEEDRRK…LLLPVAEYFS (110 aa)). The BRCT domain occupies 322 to 415 (KHKKLFEGLK…LLLPVAEYFS (94 aa)). A disordered region spans residues 448 to 515 (GEDPGNLNES…GKKPRVMAGT (68 aa)). Over residues 456-486 (ESEEEEEEDDNNEGDGDEEGENEEEEEDAEA) the composition is skewed to acidic residues. Residues 487–508 (GSEKEEEARLAALEEQRMEGKK) are compositionally biased toward basic and acidic residues. Lys517 is covalently cross-linked (Glycyl lysine isopeptide (Lys-Gly) (interchain with G-Cter in SUMO1); alternate). Lys517 participates in a covalent cross-link: Glycyl lysine isopeptide (Lys-Gly) (interchain with G-Cter in SUMO2); alternate. The required for 28S ribosomal RNA processing stretch occupies residues 539–588 (MMKKREKYLYQKIMFGKRRKIREANKLAEKRKAHDEAVRSEKKAKKARPE). The disordered stretch occupies residues 565 to 588 (LAEKRKAHDEAVRSEKKAKKARPE).

It belongs to the pescadillo family. Component of the PeBoW complex, composed of BOP1, PES1 and WDR12. The complex is held together by BOP1, which interacts with PES1 via its N-terminal domain and with WDR12 via a high-affinity interaction between the seven-bladed beta-propeller domains of the 2 proteins. The PeBoW complex associates with the 66S pre-ribosome. The PeBoW complex also associates with DDX27, PES1 interacts directly with DDX27. Interacts with IRS1 and UBTF. May interact with MAP1B. Sumoylated. In terms of tissue distribution, significant levels are detected in a variety of cancer cell lines, including glioblastoma, breast carcinoma, colon carcinoma and cervical carcinoma cells. Levels are abnormally elevated in malignant tumors of astrocytic origin.

It localises to the nucleus. The protein localises to the nucleolus. It is found in the nucleoplasm. Its subcellular location is the chromosome. Functionally, component of the PeBoW complex, which is required for maturation of 28S and 5.8S ribosomal RNAs and formation of the 60S ribosome. The polypeptide is Pescadillo homolog (Homo sapiens (Human)).